Reading from the N-terminus, the 74-residue chain is Cecropin-P4 (74 aa).

The N-terminal stretch at 1-13 (MFLMYLLVQTTES) is a signal peptide. Residues 45 to 74 (HRRSVAHQEEASLHVKTDELPSPDTVREQL) constitute a propeptide, removed in mature form. Residues 51–74 (HQEEASLHVKTDELPSPDTVREQL) are disordered.

The protein belongs to the cecropin family. In terms of tissue distribution, expressed in the body wall, intestine, uterus and ovary.

It localises to the secreted. Functionally, has antibacterial activity against several Gram-positive and Gram-negative bacteria. Is weakly active against yeasts. Acts by a nonpore mechanism. This is Cecropin-P4 (ASCEC-4) from Ascaris suum (Pig roundworm).